The following is a 303-amino-acid chain: Trans-aconitate 2-methyltransferase (303 aa).

Positions Glu271–Arg303 are disordered. The span at Gly272–Arg303 shows a compositional bias: gly residues.

This sequence belongs to the methyltransferase superfamily. Tam family.

It localises to the cytoplasm. It catalyses the reaction trans-aconitate + S-adenosyl-L-methionine = (E)-3-(methoxycarbonyl)pent-2-enedioate + S-adenosyl-L-homocysteine. Functionally, catalyzes the S-adenosylmethionine monomethyl esterification of trans-aconitate. In Streptomyces coelicolor (strain ATCC BAA-471 / A3(2) / M145), this protein is Trans-aconitate 2-methyltransferase.